The primary structure comprises 1455 residues: Fanconi anemia group A protein (1455 aa).

A Nuclear localization signal motif is present at residues 18-34 (RRRAWAELLAGRVKREK). Residue Ser1449 is modified to Phosphoserine.

In terms of assembly, belongs to the multisubunit FA complex composed of FANCA, FANCB, FANCC, FANCE, FANCF, FANCG, FANCL/PHF9 and FANCM. The complex is not found in FA patients. In complex with FANCF, FANCG and FANCL, but not with FANCC, nor FANCE, interacts with HES1; this interaction may be essential for the stability and nuclear localization of FA core complex proteins. The complex with FANCC and FANCG may also include EIF2AK2 and HSP70. Interacts with FAAP20/C1orf86; interaction is direct. In terms of processing, phosphorylation is required for the formation of the nuclear complex. Not phosphorylated in cells derived from groups A, B, C, E, F, G, and H.

It is found in the nucleus. The protein localises to the cytoplasm. Functionally, DNA repair protein that may operate in a postreplication repair or a cell cycle checkpoint function. May be involved in interstrand DNA cross-link repair and in the maintenance of normal chromosome stability. The chain is Fanconi anemia group A protein (FANCA) from Homo sapiens (Human).